Consider the following 400-residue polypeptide: Tryptophan synthase beta chain (400 aa).

N6-(pyridoxal phosphate)lysine is present on Lys92.

It belongs to the TrpB family. As to quaternary structure, tetramer of two alpha and two beta chains. Pyridoxal 5'-phosphate serves as cofactor.

The enzyme catalyses (1S,2R)-1-C-(indol-3-yl)glycerol 3-phosphate + L-serine = D-glyceraldehyde 3-phosphate + L-tryptophan + H2O. It functions in the pathway amino-acid biosynthesis; L-tryptophan biosynthesis; L-tryptophan from chorismate: step 5/5. In terms of biological role, the beta subunit is responsible for the synthesis of L-tryptophan from indole and L-serine. The chain is Tryptophan synthase beta chain from Neisseria meningitidis serogroup B (strain ATCC BAA-335 / MC58).